The chain runs to 307 residues: Fructose-bisphosphate aldolase (307 aa).

Ser-49 provides a ligand contact to D-glyceraldehyde 3-phosphate. Asp-82 (proton donor) is an active-site residue. Zn(2+) contacts are provided by His-83, Asp-104, Glu-134, and His-180. Residue Gly-181 participates in dihydroxyacetone phosphate binding. His-210 lines the Zn(2+) pocket. Dihydroxyacetone phosphate is bound by residues 211–213 (GAS) and 253–256 (NTDT).

It belongs to the class II fructose-bisphosphate aldolase family. As to quaternary structure, homodimer. The cofactor is Zn(2+).

It carries out the reaction beta-D-fructose 1,6-bisphosphate = D-glyceraldehyde 3-phosphate + dihydroxyacetone phosphate. Its pathway is carbohydrate degradation; glycolysis; D-glyceraldehyde 3-phosphate and glycerone phosphate from D-glucose: step 4/4. Functionally, catalyzes the aldol condensation of dihydroxyacetone phosphate (DHAP or glycerone-phosphate) with glyceraldehyde 3-phosphate (G3P) to form fructose 1,6-bisphosphate (FBP) in gluconeogenesis and the reverse reaction in glycolysis. This chain is Fructose-bisphosphate aldolase (fba), found in Helicobacter pylori (strain ATCC 700392 / 26695) (Campylobacter pylori).